The following is a 574-amino-acid chain: 3-hydroxy-3-methylglutaryl-coenzyme A reductase 3 (574 aa).

Residues Met1–Ser30 are disordered. A helical membrane pass occupies residues Pro41–Leu61. N-linked (GlcNAc...) asparagine glycosylation is present at Asn78. Residues Val83–Phe103 form a helical membrane-spanning segment. Positions Val104 to Glu161 are linker. Asn113 is a glycosylation site (N-linked (GlcNAc...) asparagine). A catalytic region spans residues Asp162–Lys574. The Charge relay system role is filled by Glu256. Asn320 carries an N-linked (GlcNAc...) asparagine glycan. Lys388 serves as the catalytic Charge relay system. Asn433 is a glycosylation site (N-linked (GlcNAc...) asparagine). The Charge relay system role is filled by Asp464. His562 acts as the Proton donor in catalysis. N-linked (GlcNAc...) asparagine glycosylation occurs at Asn566.

The protein belongs to the HMG-CoA reductase family. In terms of tissue distribution, expressed in mature petals and anthers.

Its subcellular location is the endoplasmic reticulum membrane. The catalysed reaction is (R)-mevalonate + 2 NADP(+) + CoA = (3S)-3-hydroxy-3-methylglutaryl-CoA + 2 NADPH + 2 H(+). The protein operates within metabolic intermediate biosynthesis; (R)-mevalonate biosynthesis; (R)-mevalonate from acetyl-CoA: step 3/3. Catalyzes the synthesis of mevalonate. The specific precursor of all isoprenoid compounds present in plants. The polypeptide is 3-hydroxy-3-methylglutaryl-coenzyme A reductase 3 (HMG3) (Solanum tuberosum (Potato)).